The primary structure comprises 131 residues: Small ribosomal subunit protein uS8 (131 aa).

The protein belongs to the universal ribosomal protein uS8 family. In terms of assembly, part of the 30S ribosomal subunit. Contacts proteins S5 and S12.

Functionally, one of the primary rRNA binding proteins, it binds directly to 16S rRNA central domain where it helps coordinate assembly of the platform of the 30S subunit. This chain is Small ribosomal subunit protein uS8, found in Helicobacter pylori (strain P12).